Here is a 149-residue protein sequence, read N- to C-terminus: Transcriptional regulator MraZ (149 aa).

2 consecutive SpoVT-AbrB domains span residues 7 to 54 (KYVN…GISH) and 83 to 126 (AVQL…QPQN).

The protein belongs to the MraZ family. Forms oligomers.

Its subcellular location is the cytoplasm. It is found in the nucleoid. The sequence is that of Transcriptional regulator MraZ from Rickettsia conorii (strain ATCC VR-613 / Malish 7).